A 287-amino-acid polypeptide reads, in one-letter code: Histone H1 (287 aa).

Over residues 1–11 (MATEEPVIVNE) the composition is skewed to low complexity. Disordered regions lie at residues 1–58 (MATE…THPP) and 120–287 (YKLP…RGRK). Positions 33 to 51 (GKAKKETKAKKPAAPRKRS) are enriched in basic residues. The H15 domain maps to 55 to 124 (THPPYFEMIK…KVKNSYKLPS (70 aa)). Basic residues predominate over residues 135 to 202 (AKKKPAAAKS…KAKPVAKAKP (68 aa)). The span at 203–248 (KAAAAAKPKAAVKPKAAPAKTKAAVKPNLKAKTTTAKVAKTATRTT) shows a compositional bias: low complexity. Residues 276–287 (PAKKATPKRGRK) are compositionally biased toward basic residues.

It belongs to the histone H1/H5 family.

Its subcellular location is the nucleus. It localises to the chromosome. Its function is as follows. Histones H1 are necessary for the condensation of nucleosome chains into higher-order structures. This Solanum lycopersicum (Tomato) protein is Histone H1.